The chain runs to 335 residues: tRNA-dihydrouridine(20/20a) synthase (335 aa).

Residues 20–22 and Q72 contribute to the FMN site; that span reads PML. Catalysis depends on C102, which acts as the Proton donor. Residues K141, H173, 213–215, and 235–236 each bind FMN; these read NGG and GR.

Belongs to the Dus family. DusA subfamily. Requires FMN as cofactor.

It carries out the reaction 5,6-dihydrouridine(20) in tRNA + NADP(+) = uridine(20) in tRNA + NADPH + H(+). The enzyme catalyses 5,6-dihydrouridine(20) in tRNA + NAD(+) = uridine(20) in tRNA + NADH + H(+). It catalyses the reaction 5,6-dihydrouridine(20a) in tRNA + NADP(+) = uridine(20a) in tRNA + NADPH + H(+). The catalysed reaction is 5,6-dihydrouridine(20a) in tRNA + NAD(+) = uridine(20a) in tRNA + NADH + H(+). Its function is as follows. Catalyzes the synthesis of 5,6-dihydrouridine (D), a modified base found in the D-loop of most tRNAs, via the reduction of the C5-C6 double bond in target uridines. Specifically modifies U20 and U20a in tRNAs. The protein is tRNA-dihydrouridine(20/20a) synthase of Shewanella oneidensis (strain ATCC 700550 / JCM 31522 / CIP 106686 / LMG 19005 / NCIMB 14063 / MR-1).